Here is a 552-residue protein sequence, read N- to C-terminus: Probable protein kinase UbiB (552 aa).

One can recognise a Protein kinase domain in the interval 121–504; sequence HFDTVPLASA…QGLQRRVVNA (384 aa). Residues 127–135 and Lys149 contribute to the ATP site; that span reads LASASISQV. The Proton acceptor role is filled by Asp284. Helical transmembrane passes span 501–521 and 530–550; these read VVNAIVGSGLLVAAAVLYGLH and IPVWSLISGCIGALALFSAWW.

Belongs to the ABC1 family. UbiB subfamily.

Its subcellular location is the cell inner membrane. It participates in cofactor biosynthesis; ubiquinone biosynthesis [regulation]. Functionally, is probably a protein kinase regulator of UbiI activity which is involved in aerobic coenzyme Q (ubiquinone) biosynthesis. This chain is Probable protein kinase UbiB, found in Xylella fastidiosa (strain M23).